Reading from the N-terminus, the 99-residue chain is Aspartyl/glutamyl-tRNA(Asn/Gln) amidotransferase subunit C (99 aa).

This sequence belongs to the GatC family. As to quaternary structure, heterotrimer of A, B and C subunits.

It catalyses the reaction L-glutamyl-tRNA(Gln) + L-glutamine + ATP + H2O = L-glutaminyl-tRNA(Gln) + L-glutamate + ADP + phosphate + H(+). The catalysed reaction is L-aspartyl-tRNA(Asn) + L-glutamine + ATP + H2O = L-asparaginyl-tRNA(Asn) + L-glutamate + ADP + phosphate + 2 H(+). Its function is as follows. Allows the formation of correctly charged Asn-tRNA(Asn) or Gln-tRNA(Gln) through the transamidation of misacylated Asp-tRNA(Asn) or Glu-tRNA(Gln) in organisms which lack either or both of asparaginyl-tRNA or glutaminyl-tRNA synthetases. The reaction takes place in the presence of glutamine and ATP through an activated phospho-Asp-tRNA(Asn) or phospho-Glu-tRNA(Gln). This is Aspartyl/glutamyl-tRNA(Asn/Gln) amidotransferase subunit C from Corynebacterium glutamicum (strain R).